We begin with the raw amino-acid sequence, 242 residues long: Ubiquinone biosynthesis O-methyltransferase (242 aa).

4 residues coordinate S-adenosyl-L-methionine: R44, G64, D85, and M129.

Belongs to the methyltransferase superfamily. UbiG/COQ3 family.

The catalysed reaction is a 3-demethylubiquinol + S-adenosyl-L-methionine = a ubiquinol + S-adenosyl-L-homocysteine + H(+). The enzyme catalyses a 3-(all-trans-polyprenyl)benzene-1,2-diol + S-adenosyl-L-methionine = a 2-methoxy-6-(all-trans-polyprenyl)phenol + S-adenosyl-L-homocysteine + H(+). It participates in cofactor biosynthesis; ubiquinone biosynthesis. Functionally, O-methyltransferase that catalyzes the 2 O-methylation steps in the ubiquinone biosynthetic pathway. In Salmonella typhi, this protein is Ubiquinone biosynthesis O-methyltransferase.